The primary structure comprises 58 residues: Lantibiotic macedovicin (58 aa).

The propeptide occupies Met1–Gly25. Thr33 and Thr35 each carry 2,3-didehydrobutyrine. 2 cross-links (beta-methyllanthionine (Thr-Cys)) span residues Thr33–Cys38 and Thr35–Cys57. A disulfide bond links Cys46 and Cys54.

In terms of processing, maturation of macedovicin involves the enzymatic dehydration of Thr-33 and Thr-35 into dehydrobutyrine residues, that can form a beta-methyllanthionine bond with Cys-38 and Cys-57, respectively. This is followed by membrane translocation and cleavage of the modified precursor.

The protein resides in the secreted. Functionally, lanthionine-containing peptide antibiotic (lantibiotic) active on Gram-positive bacteria. Macedovicin inhibits a broad spectrum of lactic acid bacteria, several food spoilage species (e.g. Clostridium spp.) and oral streptococci. The bactericidal activity of lantibiotics is based on depolarization of energized bacterial cytoplasmic membranes, initiated by the formation of aqueous transmembrane pores. This chain is Lantibiotic macedovicin, found in Streptococcus macedonicus (strain ACA-DC 198).